The following is a 132-amino-acid chain: DNA-directed RNA polymerase subunit omega (132 aa).

The protein belongs to the RNA polymerase subunit omega family. In terms of assembly, the RNAP catalytic core consists of 2 alpha, 1 beta, 1 beta' and 1 omega subunit. When a sigma factor is associated with the core the holoenzyme is formed, which can initiate transcription.

The catalysed reaction is RNA(n) + a ribonucleoside 5'-triphosphate = RNA(n+1) + diphosphate. Functionally, promotes RNA polymerase assembly. Latches the N- and C-terminal regions of the beta' subunit thereby facilitating its interaction with the beta and alpha subunits. The polypeptide is DNA-directed RNA polymerase subunit omega (Bartonella quintana (strain Toulouse) (Rochalimaea quintana)).